The chain runs to 307 residues: UDP-3-O-acyl-N-acetylglucosamine deacetylase (307 aa).

Residues H78, H241, and D245 each contribute to the Zn(2+) site. Residue H268 is the Proton donor of the active site.

This sequence belongs to the LpxC family. The cofactor is Zn(2+).

The catalysed reaction is a UDP-3-O-[(3R)-3-hydroxyacyl]-N-acetyl-alpha-D-glucosamine + H2O = a UDP-3-O-[(3R)-3-hydroxyacyl]-alpha-D-glucosamine + acetate. Its pathway is glycolipid biosynthesis; lipid IV(A) biosynthesis; lipid IV(A) from (3R)-3-hydroxytetradecanoyl-[acyl-carrier-protein] and UDP-N-acetyl-alpha-D-glucosamine: step 2/6. Its function is as follows. Catalyzes the hydrolysis of UDP-3-O-myristoyl-N-acetylglucosamine to form UDP-3-O-myristoylglucosamine and acetate, the committed step in lipid A biosynthesis. The polypeptide is UDP-3-O-acyl-N-acetylglucosamine deacetylase (Acidovorax sp. (strain JS42)).